The sequence spans 364 residues: Ribosomal RNA small subunit methyltransferase H (364 aa).

Residues 55-57, Asp-75, Phe-101, Asp-122, and Gln-129 contribute to the S-adenosyl-L-methionine site; that span reads GGH. Residues 333-364 are disordered; the sequence is LPPGGGAGFVKAGRVPGEPVRGTRAGSKGRRR.

The protein belongs to the methyltransferase superfamily. RsmH family.

The protein localises to the cytoplasm. It catalyses the reaction cytidine(1402) in 16S rRNA + S-adenosyl-L-methionine = N(4)-methylcytidine(1402) in 16S rRNA + S-adenosyl-L-homocysteine + H(+). Functionally, specifically methylates the N4 position of cytidine in position 1402 (C1402) of 16S rRNA. This chain is Ribosomal RNA small subunit methyltransferase H, found in Bordetella bronchiseptica (strain ATCC BAA-588 / NCTC 13252 / RB50) (Alcaligenes bronchisepticus).